The chain runs to 616 residues: D-glutamate cyclase, mitochondrial (616 aa).

Residues 1-28 (MPFTLHLRSRLPSAIRSLILQKKPNIRN) constitute a mitochondrion transit peptide.

This sequence belongs to the D-glutamate cyclase family.

The protein resides in the mitochondrion matrix. It catalyses the reaction D-glutamate = 5-oxo-D-proline + H2O. Functionally, D-glutamate cyclase that converts D-glutamate to 5-oxo-D-proline. This chain is D-glutamate cyclase, mitochondrial, found in Homo sapiens (Human).